The chain runs to 224 residues: 7-cyano-7-deazaguanine synthase (224 aa).

An ATP-binding site is contributed by 9–19 (ISGGMDSTLCA). The Zn(2+) site is built by Cys-190, Cys-198, Cys-201, and Cys-204.

The protein belongs to the QueC family. Requires Zn(2+) as cofactor.

It carries out the reaction 7-carboxy-7-deazaguanine + NH4(+) + ATP = 7-cyano-7-deazaguanine + ADP + phosphate + H2O + H(+). Its pathway is purine metabolism; 7-cyano-7-deazaguanine biosynthesis. In terms of biological role, catalyzes the ATP-dependent conversion of 7-carboxy-7-deazaguanine (CDG) to 7-cyano-7-deazaguanine (preQ(0)). The sequence is that of 7-cyano-7-deazaguanine synthase from Campylobacter jejuni subsp. doylei (strain ATCC BAA-1458 / RM4099 / 269.97).